Here is a 253-residue protein sequence, read N- to C-terminus: Ubiquinone/menaquinone biosynthesis C-methyltransferase UbiE (253 aa).

S-adenosyl-L-methionine is bound by residues Thr-76, Asp-97, and 125-126 (NA).

It belongs to the class I-like SAM-binding methyltransferase superfamily. MenG/UbiE family.

It carries out the reaction a 2-demethylmenaquinol + S-adenosyl-L-methionine = a menaquinol + S-adenosyl-L-homocysteine + H(+). It catalyses the reaction a 2-methoxy-6-(all-trans-polyprenyl)benzene-1,4-diol + S-adenosyl-L-methionine = a 5-methoxy-2-methyl-3-(all-trans-polyprenyl)benzene-1,4-diol + S-adenosyl-L-homocysteine + H(+). It participates in quinol/quinone metabolism; menaquinone biosynthesis; menaquinol from 1,4-dihydroxy-2-naphthoate: step 2/2. The protein operates within cofactor biosynthesis; ubiquinone biosynthesis. Functionally, methyltransferase required for the conversion of demethylmenaquinol (DMKH2) to menaquinol (MKH2) and the conversion of 2-polyprenyl-6-methoxy-1,4-benzoquinol (DDMQH2) to 2-polyprenyl-3-methyl-6-methoxy-1,4-benzoquinol (DMQH2). The protein is Ubiquinone/menaquinone biosynthesis C-methyltransferase UbiE of Stenotrophomonas maltophilia (strain K279a).